The primary structure comprises 192 residues: Imidazoleglycerol-phosphate dehydratase (192 aa).

This sequence belongs to the imidazoleglycerol-phosphate dehydratase family.

The protein localises to the cytoplasm. The catalysed reaction is D-erythro-1-(imidazol-4-yl)glycerol 3-phosphate = 3-(imidazol-4-yl)-2-oxopropyl phosphate + H2O. It participates in amino-acid biosynthesis; L-histidine biosynthesis; L-histidine from 5-phospho-alpha-D-ribose 1-diphosphate: step 6/9. The polypeptide is Imidazoleglycerol-phosphate dehydratase (Staphylococcus aureus (strain bovine RF122 / ET3-1)).